The chain runs to 1070 residues: 3',5'-cyclic-AMP phosphodiesterase (1070 aa).

4 disordered regions span residues 1–91 (MSQE…KQDS), 166–215 (STSI…TRFQ), 487–516 (VPAS…LSQG), and 615–653 (SAGQ…RLPT). Over residues 51-69 (KQVQVQSQKFSSTSSTTKV) the composition is skewed to low complexity. A compositionally biased stretch (polar residues) spans 70 to 84 (ATHSFSMSSSAGTTG). Residues 166–210 (STSIITSSEQRTSTSTSSSSSTRYIASGSSNLAGGNSNSASSASS) are compositionally biased toward low complexity. Polar residues predominate over residues 488–506 (PASNKSRRPNQSSSASRSG). The region spanning 656 to 985 (VETPRENELG…DYYQSMIPPS (330 aa)) is the PDEase domain. The active-site Proton donor is the His732. 3',5'-cyclic AMP is bound at residue 732-736 (HNSLH). His736, His772, Asp773, and Asp890 together coordinate a divalent metal cation. 3 residues coordinate 3',5'-cyclic AMP: Asp773, Asp890, and Gln941. Residues 1007–1024 (EESDQENLAELEEGDESG) are compositionally biased toward acidic residues. The disordered stretch occupies residues 1007–1070 (EESDQENLAE…CQNQPQHGGM (64 aa)). Residues 1025 to 1042 (GESTTTGTTGTTAASALS) show a composition bias toward low complexity. Gly residues predominate over residues 1043–1054 (GAGGGGGGGGGM). Residues 1060 to 1070 (GCQNQPQHGGM) are compositionally biased toward polar residues.

The protein belongs to the cyclic nucleotide phosphodiesterase family. PDE4 subfamily. In terms of assembly, monomer. Requires a divalent metal cation as cofactor.

It catalyses the reaction 3',5'-cyclic AMP + H2O = AMP + H(+). Its pathway is purine metabolism; 3',5'-cyclic AMP degradation; AMP from 3',5'-cyclic AMP: step 1/1. In terms of biological role, hydrolyzes the second messenger cAMP, which is a key regulator of many important physiological processes. Vital for female fertility. Required for learning/memory. This Drosophila melanogaster (Fruit fly) protein is 3',5'-cyclic-AMP phosphodiesterase (dnc).